The following is a 797-amino-acid chain: uncharacterized protein (797 aa).

Residues 394–403 (SDDRDDRDKD) are compositionally biased toward basic and acidic residues. Residues 394-724 (SDDRDDRDKD…GTKDKEGNAN (331 aa)) are disordered. Residues 404-713 (EYELENEEYN…GEDEGEDEGD (310 aa)) are compositionally biased toward acidic residues.

The protein belongs to the herpesviridae BBRF2 family.

This is an uncharacterized protein from Saimiriine herpesvirus 2 (strain 11) (SaHV-2).